The following is a 99-amino-acid chain: Integration host factor subunit alpha (99 aa).

Positions 49–73 (FGNFDLRDKNQRPGRNPKTGEDIPI) are disordered.

It belongs to the bacterial histone-like protein family. As to quaternary structure, heterodimer of an alpha and a beta chain.

Its function is as follows. This protein is one of the two subunits of integration host factor, a specific DNA-binding protein that functions in genetic recombination as well as in transcriptional and translational control. The protein is Integration host factor subunit alpha (ihfA) of Serratia marcescens.